We begin with the raw amino-acid sequence, 517 residues long: Zinc finger protein 215 (517 aa).

One can recognise an SCAN box domain in the interval 48–126; sequence RQKFRHFQYL…EDMVTLIEDV (79 aa). Residues 164 to 237 enclose the KRAB domain; the sequence is VTFKDVVVEF…EKEIPRKTIF (74 aa). 4 C2H2-type zinc fingers span residues 379 to 401, 407 to 429, 462 to 484, and 490 to 512; these read YECY…QIIH, YKCS…QKLH, YECV…QMIH, and FKCK…QKLH.

The protein belongs to the krueppel C2H2-type zinc-finger protein family.

The protein localises to the nucleus. Functionally, may be involved in transcriptional regulation. The polypeptide is Zinc finger protein 215 (ZNF215) (Pongo abelii (Sumatran orangutan)).